The sequence spans 552 residues: ATP synthase subunit alpha, mitochondrial (552 aa).

Residues 1-47 (MSIFSARLASSVARNLPKAANQVACKAAYPAASLAARKLHVASTQRS) constitute a mitochondrion transit peptide. Residue 211 to 218 (GDRQTGKT) coordinates ATP.

This sequence belongs to the ATPase alpha/beta chains family. F-type ATPases have 2 components, CF(1) - the catalytic core - and CF(0) - the membrane proton channel. CF(1) has five subunits: alpha(3), beta(3), gamma(1), delta(1), epsilon(1). CF(0) has three main subunits: a, b and c.

It localises to the mitochondrion inner membrane. Functionally, mitochondrial membrane ATP synthase (F(1)F(0) ATP synthase or Complex V) produces ATP from ADP in the presence of a proton gradient across the membrane which is generated by electron transport complexes of the respiratory chain. F-type ATPases consist of two structural domains, F(1) - containing the extramembraneous catalytic core, and F(0) - containing the membrane proton channel, linked together by a central stalk and a peripheral stalk. During catalysis, ATP synthesis in the catalytic domain of F(1) is coupled via a rotary mechanism of the central stalk subunits to proton translocation. Subunits alpha and beta form the catalytic core in F(1). Rotation of the central stalk against the surrounding alpha(3)beta(3) subunits leads to hydrolysis of ATP in three separate catalytic sites on the beta subunits. Subunit alpha does not bear the catalytic high-affinity ATP-binding sites. This is ATP synthase subunit alpha, mitochondrial (blw) from Drosophila melanogaster (Fruit fly).